Here is a 434-residue protein sequence, read N- to C-terminus: Trigger factor (434 aa).

Positions 161-246 (EDRATIDFTG…LKKVEERELP (86 aa)) constitute a PPIase FKBP-type domain.

Belongs to the FKBP-type PPIase family. Tig subfamily.

The protein resides in the cytoplasm. The enzyme catalyses [protein]-peptidylproline (omega=180) = [protein]-peptidylproline (omega=0). In terms of biological role, involved in protein export. Acts as a chaperone by maintaining the newly synthesized protein in an open conformation. Functions as a peptidyl-prolyl cis-trans isomerase. In Pectobacterium atrosepticum (strain SCRI 1043 / ATCC BAA-672) (Erwinia carotovora subsp. atroseptica), this protein is Trigger factor.